Reading from the N-terminus, the 2620-residue chain is MESEEEQHMTTLLCMGFSDPATIRKALRLAKNDINEAVALLTNERPGLDYGGYEPMDSGGGPSPGPGGGPRGDGGGDGGGGGPSRGGSTGGGGGFDPPPAYHEVVDAEKNDENGNCSGEGIEFPTTNLYELESRVLTDHWSIPYKREESLGKCLLASTYLARLGLSESDENCRRFMDRCMPEAFKKLLTSSAVHKWGTEIHEGIYNMLMLLIELVAERIKQDPIPTGLLGVLTMAFNPDNEYHFKNRMKVSQRNWAEVFGEGNMFAVSPVSTFQKEPHGWVVDLVNKFGELGGFAAIQAKLHSEDIELGAVSALIQPLGVCAEYLNSSVVQPMLDPVILTTIQDVRSVEEKDLKDKRLVSIPELLSAVKLLCMRFQPDLVTIVDDLRLDILLRMLKSPHFSAKMNSLKEVTKLIEDSTLSKSVKNAIDTDRLLDWLVENSVLSIALEGNIDQAQYCDRIKGIIELLGSKLSLDELTKIWKIQSGQSSTVIENIHTIIAAAAVKFNSDQLNHLFVLIQKSWETESDRVRQKLLSLIGRIGREARFETTSGKVLDVLWELAHLPTLPSSLIQQALEEHLTILSDAYAVKEAIKRSYIIKCIEDIKRPGEWSGLEKNKKDGFKSSQLNNPQFVWVVPALRQLHEITRSFIKQTYQKQDKSIIQDLKKNFEIVKLVTGSLIACHRLAAAVAGPGGLSGSTLVDGRYTYREYLEAHLKFLAFFLQEATLYLGWNRAKEIWECLVTGQDVCELDREMCFEWFTKGQHDLESDVQQQLFKEKILKLESYEITMNGFNLFKTFFENVNLCDHRLKRQGAQLYVEKLELIGMDFIWKIAMESPDEEIANEAIQLIINYSYINLNPRLKKDSVSLHKKFIADCYTRLEAASSALGGPTLTHAVTRATKMLTATAMPTVATSVQSPYRSTKLVIIERLLLLAERYVITIEDFYSVPRTILPHGASFHGHLLTLNVTYESTKDTFTVEAHSNETIGSVRWKIAKQLCSPVDNIQIFTNDSLLTVNKDQKLLHQLGFSDEQILTVKTSGSGTPSGSSADSSTSSSSSSSGVFSSSYAMEQEKSLPGVVMALVCNVFDMLYQLANLEEPRITLRVRKLLLLIPTDPAIQEALDQLDSLGRKKTLLSESSSQSSKSPSLSSKQQHQPSASSILESLFRSFAPGMSTFRVLYNLEVLSSKLMPTADDDMARSCAKSFCENFLKAGGLSLVVNVMQRDSIPSEVDYETRQGVYSICLQLARFLLVGQTMPTLLDEDLTKDGIEALSSRPFRNVSRQTSRQMSLCGTPEKSSYRQLSVSDRSSIRVEEIIPAARVAIQTMEVSDFTSTVACFMRLSWAAAAGRLDLVGSSQPIKESNSLCPAGIRNRLSSSGSNCSSGSEGEPVALHAGICVRQQSVSTKDSLIAGEALSLLVTCLQLRSQQLASFYNLPCVADFIIDILLGSPSAEIRRVACDQLYTLSQTDTSAHPDVQKPNQFLLGVILTAQLPLWSPTSIMRGVNQRLLSQCMEYFDLRCQLLDDLTTSEMEQLRISPATMLEDEITWLDNFEPNRTAECETSEADNILLAGHLRLIKTLLSLCGAEKEMLGSSLIKPLLDDFLFRASRIILNSHSPAGSAAISQQDFHPKCSTANSRLAAYEVLVMLADSSPSNLQIIIKELLSMHHQPDPALTKEFDYLPPVDSRSSSGFVGLRNGGATCYMNAVFQQLYMQPGLPESLLSVDDDTDNPDDSVFYQVQSLFGHLMESKLQYYVPENFWKIFKMWNKELYVREQQDAYEFFTSLIDQMDEYLKKMGRDQIFKNTFQGIYSDQKICKDCPHRYEREEAFMALNLGVTSCQSLEISLDQFVRGEVLEGSNAYYCEKCKEKRITVKRTCIKSLPSVLVIHLMRFGFDWESGRSIKYDEQIRFPWMLNMEPYTVSGMARQDSSSEVGENGRSVDQGGGGSPRKKVALTENYELVGVIVHSGQAHAGHYYSFIKDRRGCGKGKWYKFNDTVIEEFDLNDETLEYECFGGEYRPKVYDQTNPYTDVRRRYWNAYMLFYQRVSDQNSPVLPKKSRVSVVRQEAEDLSLSAPSSPEISPQSSPRPHRPNNDRLSILTKLVKKGEKKGLFVEKMPARIYQMVRDENLKFMKNRDVYSSDYFSFVLSLASLNATKLKHPYYPCMAKVSLQLAIQFLFQTYLRTKKKLRVDTEEWIATIEALLSKSFDACQWLVEYFISSEGRELIKIFLLECNVREVRVAVATILEKTLDSALFYQDKLKSLHQLLEVLLALLDKDVPENCKNCAQYFFLFNTFVQKQGIRAGDLLLRHSALRHMISFLLGASRQNNQIRRWSSAQAREFGNLHNTVALLVLHSDVSSQRNVAPGIFKQRPPISIAPSSPLLPLHEEVEALLFMSEGKPYLLEVMFALRELTGSLLALIEMVVYCCFCNEHFSFTMLHFIKNQLETAPPHELKNTFQLLHEILVIEDPIQVERVKFVFETENGLLALMHHSNHVDSSRCYQCVKFLVTLAQKCPAAKEYFKENSHHWSWAVQWLQKKMSEHYWTPQSNVSNETSTGKTFQRTISAQDTLAYATALLNEKEQSGSSNGSESSPANENGDRHLQQGSESPMMIGELRSDLDDVDP.

The region spanning 3 to 44 (SEEEQHMTTLLCMGFSDPATIRKALRLAKNDINEAVALLTNE) is the UBA domain. The tract at residues 45–102 (RPGLDYGGYEPMDSGGGPSPGPGGGPRGDGGGDGGGGGPSRGGSTGGGGGFDPPPAYH) is disordered. The span at 58-95 (SGGGPSPGPGGGPRGDGGGDGGGGGPSRGGSTGGGGGF) shows a compositional bias: gly residues. S63 and S88 each carry phosphoserine. At Y942 the chain carries Phosphotyrosine. 2 disordered regions span residues 1034-1054 (TSGSGTPSGSSADSSTSSSSS) and 1129-1151 (TLLSESSSQSSKSPSLSSKQQHQ). A compositionally biased stretch (low complexity) spans 1131-1151 (LSESSSQSSKSPSLSSKQQHQ). Phosphoserine occurs at positions 1141 and 1285. Residues 1689–2042 (VGLRNGGATC…NAYMLFYQRV (354 aa)) form the USP domain. Catalysis depends on C1698, which acts as the Nucleophile. A disordered region spans residues 1921 to 1945 (ARQDSSSEVGENGRSVDQGGGGSPR). At S1943 the chain carries Phosphoserine. The active-site Proton acceptor is the H1970. S2047, S2077, and S2561 each carry phosphoserine. Positions 2063–2090 (AEDLSLSAPSSPEISPQSSPRPHRPNND) are disordered. The segment covering 2069-2082 (SAPSSPEISPQSSP) has biased composition (low complexity). A Phosphothreonine modification is found at T2565. The segment at 2575–2620 (EKEQSGSSNGSESSPANENGDRHLQQGSESPMMIGELRSDLDDVDP) is disordered. The segment covering 2579–2592 (SGSSNGSESSPANE) has biased composition (low complexity). Residue S2604 is modified to Phosphoserine. A compositionally biased stretch (basic and acidic residues) spans 2611 to 2620 (LRSDLDDVDP).

The protein belongs to the peptidase C19 family. In terms of assembly, (Microbial infection) Interacts with human cytomegalovirus protein UL38.

It carries out the reaction Thiol-dependent hydrolysis of ester, thioester, amide, peptide and isopeptide bonds formed by the C-terminal Gly of ubiquitin (a 76-residue protein attached to proteins as an intracellular targeting signal).. Functionally, ubiquitin-specific protease that regulates cell survival in various contexts through modulating the protein stability of some of its substrates including DDB2, MCL1 or TP53. Plays a positive role on ferritinophagy where ferritin is degraded in lysosomes and releases free iron. The chain is Ubiquitin carboxyl-terminal hydrolase 24 (USP24) from Homo sapiens (Human).